A 403-amino-acid chain; its full sequence is 4-hydroxy-3-methylbut-2-enyl diphosphate reductase (403 aa).

A [4Fe-4S] cluster-binding site is contributed by C66. H96 is a (2E)-4-hydroxy-3-methylbut-2-enyl diphosphate binding site. H96 lines the dimethylallyl diphosphate pocket. H96 is an isopentenyl diphosphate binding site. A [4Fe-4S] cluster-binding site is contributed by C157. A (2E)-4-hydroxy-3-methylbut-2-enyl diphosphate-binding site is contributed by H185. H185 lines the dimethylallyl diphosphate pocket. H185 provides a ligand contact to isopentenyl diphosphate. E187 serves as the catalytic Proton donor. Residue T250 participates in (2E)-4-hydroxy-3-methylbut-2-enyl diphosphate binding. C288 lines the [4Fe-4S] cluster pocket. S317, S318, N319, and S379 together coordinate (2E)-4-hydroxy-3-methylbut-2-enyl diphosphate. Dimethylallyl diphosphate-binding residues include S317, S318, N319, and S379. Isopentenyl diphosphate contacts are provided by S317, S318, N319, and S379.

Belongs to the IspH family. It depends on [4Fe-4S] cluster as a cofactor.

It carries out the reaction isopentenyl diphosphate + 2 oxidized [2Fe-2S]-[ferredoxin] + H2O = (2E)-4-hydroxy-3-methylbut-2-enyl diphosphate + 2 reduced [2Fe-2S]-[ferredoxin] + 2 H(+). It catalyses the reaction dimethylallyl diphosphate + 2 oxidized [2Fe-2S]-[ferredoxin] + H2O = (2E)-4-hydroxy-3-methylbut-2-enyl diphosphate + 2 reduced [2Fe-2S]-[ferredoxin] + 2 H(+). Its pathway is isoprenoid biosynthesis; dimethylallyl diphosphate biosynthesis; dimethylallyl diphosphate from (2E)-4-hydroxy-3-methylbutenyl diphosphate: step 1/1. It functions in the pathway isoprenoid biosynthesis; isopentenyl diphosphate biosynthesis via DXP pathway; isopentenyl diphosphate from 1-deoxy-D-xylulose 5-phosphate: step 6/6. Catalyzes the conversion of 1-hydroxy-2-methyl-2-(E)-butenyl 4-diphosphate (HMBPP) into a mixture of isopentenyl diphosphate (IPP) and dimethylallyl diphosphate (DMAPP). Acts in the terminal step of the DOXP/MEP pathway for isoprenoid precursor biosynthesis. In Rippkaea orientalis (strain PCC 8801 / RF-1) (Cyanothece sp. (strain PCC 8801)), this protein is 4-hydroxy-3-methylbut-2-enyl diphosphate reductase.